The sequence spans 139 residues: Large ribosomal subunit protein uL13c (139 aa).

It belongs to the universal ribosomal protein uL13 family. As to quaternary structure, part of the 50S ribosomal subunit.

It localises to the plastid. It is found in the chloroplast. The protein is Large ribosomal subunit protein uL13c of Trieres chinensis (Marine centric diatom).